The sequence spans 937 residues: Putative leucine-rich repeat receptor-like serine/threonine-protein kinase At3g53590 (937 aa).

An N-terminal signal peptide occupies residues 1–20; it reads MIPPNINVLIRSICINLVTS. Residues 21–547 are Extracellular-facing; it reads LPLNFAYIFI…LLAQTSGIRT (527 aa). N-linked (GlcNAc...) asparagine glycosylation is found at Asn-50, Asn-63, Asn-90, and Asn-114. LRR repeat units follow at residues 102–126, 127–150, 152–173, 174–198, 200–222, 223–249, 251–270, and 271–294; these read LLYL…IGRI, SSLK…LGNL, NLNR…SFGN, LRSI…LSKL, KLVH…LAQL, PSLT…HFSR, VKLS…LSRI, and ENLS…KLSD. Residues Asn-162, Asn-184, and Asn-210 are each glycosylated (N-linked (GlcNAc...) asparagine). N-linked (GlcNAc...) asparagine glycosylation is found at Asn-272 and Asn-295. 3 LRR repeats span residues 296–316, 317–341, and 343–360; these read MTTI…SFSD, LNSL…IWQD, and SFEN…NFSD. N-linked (GlcNAc...) asparagine glycosylation is found at Asn-327, Asn-357, Asn-370, Asn-413, Asn-499, and Asn-516. A helical transmembrane segment spans residues 548–568; that stretch reads IVWMMIVAGSVVAATVLSVTA. Residues 569 to 937 lie on the Cytoplasmic side of the membrane; the sequence is TLLYVRKRRE…SGFFHAVKPR (369 aa). One can recognise a Protein kinase domain in the interval 614 to 886; it reads FDSSTLIGRG…SKVVKELEGI (273 aa). ATP-binding positions include 620–628 and Lys-642; that span reads IGRGSYGKV. Catalysis depends on Asp-738, which acts as the Proton acceptor.

Belongs to the protein kinase superfamily. Ser/Thr protein kinase family.

It is found in the cell membrane. The enzyme catalyses L-seryl-[protein] + ATP = O-phospho-L-seryl-[protein] + ADP + H(+). The catalysed reaction is L-threonyl-[protein] + ATP = O-phospho-L-threonyl-[protein] + ADP + H(+). The polypeptide is Putative leucine-rich repeat receptor-like serine/threonine-protein kinase At3g53590 (Arabidopsis thaliana (Mouse-ear cress)).